The chain runs to 509 residues: MAAIGVHLGCTSACVAVYKDGRAGVVANDAGDRVTPAVVAYSENEEIVGLAAKQSRIRNISNTVMKVKQILGRSSSDPQAQKYIAESKCLVIEKNGKLRYEIDTGEETKFVNPEDVARLIFSKMKETAHSVLGSDANDVVITVPFDFGEKQKNALGEAARAAGFNVLRLIHEPSAALLAYGIGQDSPTGKSNILVFKLGGTSLSLSVMEVNSGIYRVLSTNTDDNIGGAHFTETLAQYLASEFQRSFKHDVRGNARAMMKLTNSAEVAKHSLSTLGSANCFLDSLYEGQDFDCNVSRARFELLCSPLFNKCIEAIRGLLDQNGFTADDINKVVLCGGSSRIPKLQQLIKDLFPAVELLNSIPPDEVIPIGAAIEAGILIGKENLLVEDSLMIECSARDILVKGVDESGASRFTVLFPSGTPLPARRQHTLQAPGSISSVCLELYESDGKNSAKEETKFAQVVLQDLDKKENGLRDILAVLTMKRDGSLHVTCTDQETGKCEAISIEIAS.

This sequence belongs to the heat shock protein 70 family. In terms of assembly, component of ribosome-associated complex (RAC), a heterodimer composed of Hsp70/DnaK-type chaperone HSPA14 and Hsp40/DnaJ-type chaperone DNAJC2.

The protein resides in the cytoplasm. It is found in the cytosol. In terms of biological role, component of the ribosome-associated complex (RAC), a complex involved in folding or maintaining nascent polypeptides in a folding-competent state. In the RAC complex, binds to the nascent polypeptide chain, while DNAJC2 stimulates its ATPase activity. This Homo sapiens (Human) protein is Heat shock 70 kDa protein 14 (HSPA14).